A 209-amino-acid chain; its full sequence is Uracil phosphoribosyltransferase (209 aa).

Residues Arg79, Arg104, and Asp131–Ser139 contribute to the 5-phospho-alpha-D-ribose 1-diphosphate site. Uracil-binding positions include Ile194 and Gly199–Ala201. Asp200 contributes to the 5-phospho-alpha-D-ribose 1-diphosphate binding site.

Belongs to the UPRTase family. Mg(2+) is required as a cofactor.

The enzyme catalyses UMP + diphosphate = 5-phospho-alpha-D-ribose 1-diphosphate + uracil. Its pathway is pyrimidine metabolism; UMP biosynthesis via salvage pathway; UMP from uracil: step 1/1. Its activity is regulated as follows. Allosterically activated by GTP. In terms of biological role, catalyzes the conversion of uracil and 5-phospho-alpha-D-ribose 1-diphosphate (PRPP) to UMP and diphosphate. The chain is Uracil phosphoribosyltransferase from Staphylococcus epidermidis (strain ATCC 35984 / DSM 28319 / BCRC 17069 / CCUG 31568 / BM 3577 / RP62A).